The sequence spans 371 residues: Carlactonoate CLA methyltransferase (371 aa).

An S-adenosyl-L-homocysteine-binding site is contributed by Tyr21. Gln28 contacts (11R)-carlactonoate. Positions 62, 67, 101, 102, 141, and 142 each coordinate S-adenosyl-L-homocysteine. Positions 162 and 163 each coordinate (11R)-carlactonoate. The Mg(2+) site is built by Asn180, Asp266, Tyr268, and Asp269.

This sequence belongs to the methyltransferase superfamily. Type-7 methyltransferase family. SABATH subfamily. In terms of assembly, homodimer. The cofactor is Mg(2+).

The enzyme catalyses (11R)-carlactonoate + S-adenosyl-L-methionine = (11R)-methyl carlactonoate + S-adenosyl-L-homocysteine. Functionally, methyltransferase involved in the biosynthesis of strigolactone natural products, bioactive compounds promoting plant fitness and soil microbe interactions, but preventing shoot branching. Catalyzes the biosynthesis of (11R)-methyl carlactonoate (MeCLA) from (11R)-carlactonoate (CLA), downstream of MAX1; MeCLA is probably biologically active as a hormone regulating shoot branching and serves as a precursor of non-canonical strigolactones (SLs). The polypeptide is Carlactonoate CLA methyltransferase (Arabidopsis thaliana (Mouse-ear cress)).